The following is a 391-amino-acid chain: Phosphoglycerate kinase (391 aa).

Residues 21–23 (DLN), R36, 59–62 (HLGR), R114, and R147 contribute to the substrate site. ATP-binding positions include K198, E315, and 344–347 (GGDT).

It belongs to the phosphoglycerate kinase family. Monomer.

The protein resides in the cytoplasm. The enzyme catalyses (2R)-3-phosphoglycerate + ATP = (2R)-3-phospho-glyceroyl phosphate + ADP. It functions in the pathway carbohydrate degradation; glycolysis; pyruvate from D-glyceraldehyde 3-phosphate: step 2/5. This Actinobacillus succinogenes (strain ATCC 55618 / DSM 22257 / CCUG 43843 / 130Z) protein is Phosphoglycerate kinase.